A 377-amino-acid chain; its full sequence is Succinyl-diaminopimelate desuccinylase (377 aa).

H68 contributes to the Zn(2+) binding site. D70 is an active-site residue. D101 lines the Zn(2+) pocket. The Proton acceptor role is filled by E135. Zn(2+) contacts are provided by E136, E164, and H350.

The protein belongs to the peptidase M20A family. DapE subfamily. Homodimer. It depends on Zn(2+) as a cofactor. Co(2+) is required as a cofactor.

The enzyme catalyses N-succinyl-(2S,6S)-2,6-diaminopimelate + H2O = (2S,6S)-2,6-diaminopimelate + succinate. It participates in amino-acid biosynthesis; L-lysine biosynthesis via DAP pathway; LL-2,6-diaminopimelate from (S)-tetrahydrodipicolinate (succinylase route): step 3/3. Functionally, catalyzes the hydrolysis of N-succinyl-L,L-diaminopimelic acid (SDAP), forming succinate and LL-2,6-diaminopimelate (DAP), an intermediate involved in the bacterial biosynthesis of lysine and meso-diaminopimelic acid, an essential component of bacterial cell walls. The sequence is that of Succinyl-diaminopimelate desuccinylase from Vibrio vulnificus (strain CMCP6).